A 380-amino-acid polypeptide reads, in one-letter code: Glucose ABC transporter permease protein TsgB13 (380 aa).

A run of 10 helical transmembrane segments spans residues 20–40 (GTPV…LVAL), 59–81 (QFGL…AVYL), 94–114 (GQLL…SLPA), 115–135 (VALL…WAGI), 148–166 (IITS…SYLL), 202–222 (IPLF…VVAT), 255–275 (VYLF…IAEI), 282–301 (FRAA…ALLG), 305–325 (AVKV…GSSV), and 328–348 (AFGV…LFLI).

The protein belongs to the binding-protein-dependent transport system permease family. In terms of assembly, the complex is composed of two ATP-binding proteins (TsgD13), two transmembrane proteins (TsgB13 and TsgC13) and a solute-binding protein (TsgA13).

The protein localises to the cell membrane. Part of an ABC transporter complex involved in glucose import. Responsible for the translocation of the substrate across the membrane. The protein is Glucose ABC transporter permease protein TsgB13 (tsgB13) of Haloferax volcanii (strain ATCC 29605 / DSM 3757 / JCM 8879 / NBRC 14742 / NCIMB 2012 / VKM B-1768 / DS2) (Halobacterium volcanii).